Here is a 221-residue protein sequence, read N- to C-terminus: ATP phosphoribosyltransferase (221 aa).

The protein belongs to the ATP phosphoribosyltransferase family. Short subfamily. In terms of assembly, heteromultimer composed of HisG and HisZ subunits.

It is found in the cytoplasm. It catalyses the reaction 1-(5-phospho-beta-D-ribosyl)-ATP + diphosphate = 5-phospho-alpha-D-ribose 1-diphosphate + ATP. Its pathway is amino-acid biosynthesis; L-histidine biosynthesis; L-histidine from 5-phospho-alpha-D-ribose 1-diphosphate: step 1/9. In terms of biological role, catalyzes the condensation of ATP and 5-phosphoribose 1-diphosphate to form N'-(5'-phosphoribosyl)-ATP (PR-ATP). Has a crucial role in the pathway because the rate of histidine biosynthesis seems to be controlled primarily by regulation of HisG enzymatic activity. This chain is ATP phosphoribosyltransferase, found in Anaeromyxobacter sp. (strain K).